A 669-amino-acid chain; its full sequence is Dymeclin (669 aa).

A lipid anchor (N-myristoyl glycine) is attached at G2.

Belongs to the dymeclin family. In terms of assembly, interacts with GOLM1 and PPIB. In terms of processing, myristoylated in vitro; myristoylation is not essential for protein targeting to Golgi compartment.

The protein resides in the cytoplasm. It localises to the golgi apparatus. Its subcellular location is the membrane. In terms of biological role, necessary for correct organization of Golgi apparatus. Involved in bone development. This is Dymeclin (DYM) from Pongo abelii (Sumatran orangutan).